The primary structure comprises 232 residues: Purine nucleoside phosphorylase DeoD-type (232 aa).

Residue His4 participates in a purine D-ribonucleoside binding. Phosphate-binding positions include Gly20, Arg24, Arg43, and 87–90 (RVGS). A purine D-ribonucleoside contacts are provided by residues Glu162, 178 to 180 (EME), and 202 to 203 (SD). Asp203 acts as the Proton donor in catalysis.

It belongs to the PNP/UDP phosphorylase family. In terms of assembly, homohexamer; trimer of homodimers.

The catalysed reaction is a purine D-ribonucleoside + phosphate = a purine nucleobase + alpha-D-ribose 1-phosphate. It carries out the reaction a purine 2'-deoxy-D-ribonucleoside + phosphate = a purine nucleobase + 2-deoxy-alpha-D-ribose 1-phosphate. Its function is as follows. Catalyzes the reversible phosphorolytic breakdown of the N-glycosidic bond in the beta-(deoxy)ribonucleoside molecules, with the formation of the corresponding free purine bases and pentose-1-phosphate. This chain is Purine nucleoside phosphorylase DeoD-type, found in Bacillus velezensis (strain DSM 23117 / BGSC 10A6 / LMG 26770 / FZB42) (Bacillus amyloliquefaciens subsp. plantarum).